The sequence spans 334 residues: Formamidase (334 aa).

One can recognise a CN hydrolase domain in the interval Phe-14–Pro-260. The active-site Proton acceptor is the Glu-60. Lys-133 acts as the Proton donor in catalysis. Cys-166 functions as the Nucleophile in the catalytic mechanism.

The protein belongs to the carbon-nitrogen hydrolase superfamily. Aliphatic amidase family.

The enzyme catalyses formamide + H2O = formate + NH4(+). Its function is as follows. Is an aliphatic amidase with a restricted substrate specificity, as it only hydrolyzes formamide. The protein is Formamidase of Helicobacter pylori (strain Shi470).